A 122-amino-acid polypeptide reads, in one-letter code: Large ribosomal subunit protein uL14 (122 aa).

This sequence belongs to the universal ribosomal protein uL14 family. As to quaternary structure, part of the 50S ribosomal subunit. Forms a cluster with proteins L3 and L19. In the 70S ribosome, L14 and L19 interact and together make contacts with the 16S rRNA in bridges B5 and B8.

Functionally, binds to 23S rRNA. Forms part of two intersubunit bridges in the 70S ribosome. The chain is Large ribosomal subunit protein uL14 from Paraburkholderia phytofirmans (strain DSM 17436 / LMG 22146 / PsJN) (Burkholderia phytofirmans).